We begin with the raw amino-acid sequence, 351 residues long: Methylthioribose-1-phosphate isomerase (351 aa).

Residues 51-53 (RGA), Arg94, and Gln199 contribute to the substrate site. The active-site Proton donor is Asp240. Residue 250–251 (NK) coordinates substrate.

This sequence belongs to the EIF-2B alpha/beta/delta subunits family. MtnA subfamily. Homodimer.

It carries out the reaction 5-(methylsulfanyl)-alpha-D-ribose 1-phosphate = 5-(methylsulfanyl)-D-ribulose 1-phosphate. The protein operates within amino-acid biosynthesis; L-methionine biosynthesis via salvage pathway; L-methionine from S-methyl-5-thio-alpha-D-ribose 1-phosphate: step 1/6. Functionally, catalyzes the interconversion of methylthioribose-1-phosphate (MTR-1-P) into methylthioribulose-1-phosphate (MTRu-1-P). This Bacillus thuringiensis subsp. konkukian (strain 97-27) protein is Methylthioribose-1-phosphate isomerase.